Reading from the N-terminus, the 438-residue chain is SPbeta prophage-derived uncharacterized protein YopA (438 aa).

Residues 391–411 (LHVLYLGVWYLELLTLGILGY) traverse the membrane as a helical segment.

The protein resides in the cell membrane. This Bacillus subtilis (strain 168) protein is SPbeta prophage-derived uncharacterized protein YopA (yopA).